A 375-amino-acid chain; its full sequence is Glycogen synthase kinase-3 homolog YGK3 (375 aa).

The region spanning 41–329 is the Protein kinase domain; sequence VREGKRIGHG…ARQLMAHEFF (289 aa). Residues 47-55 and lysine 74 contribute to the ATP site; that span reads IGHGSFGTV. Aspartate 173 acts as the Proton acceptor in catalysis. The residue at position 211 (serine 211) is a Phosphoserine.

This sequence belongs to the protein kinase superfamily. Ser/Thr protein kinase family.

It catalyses the reaction L-seryl-[protein] + ATP = O-phospho-L-seryl-[protein] + ADP + H(+). It carries out the reaction L-threonyl-[protein] + ATP = O-phospho-L-threonyl-[protein] + ADP + H(+). In terms of biological role, required for heat stress-instigated phosphorylation of BCY1 which is involved in cell wall integrity signaling. Regulates activity of MSN2, a transcription factor that binds to the stress-response element (STRE). Probably promotes formation of a complex between MSN2 and DNA. Regulates the stability of ROG1. The protein is Glycogen synthase kinase-3 homolog YGK3 (YGK3) of Saccharomyces cerevisiae (strain ATCC 204508 / S288c) (Baker's yeast).